The sequence spans 305 residues: Oxygen-dependent coproporphyrinogen-III oxidase (305 aa).

Position 93 (serine 93) interacts with substrate. Positions 97 and 107 each coordinate a divalent metal cation. The active-site Proton donor is histidine 107. 109–111 (NVR) lines the substrate pocket. The a divalent metal cation site is built by histidine 146 and histidine 176. The segment at 241 to 276 (YVEFNLVYDRGTLFGLQSGGRTESILMSLPPQVRWG) is important for dimerization. Position 259-261 (259-261 (GGR)) interacts with substrate.

The protein belongs to the aerobic coproporphyrinogen-III oxidase family. As to quaternary structure, homodimer. A divalent metal cation is required as a cofactor.

It localises to the cytoplasm. The enzyme catalyses coproporphyrinogen III + O2 + 2 H(+) = protoporphyrinogen IX + 2 CO2 + 2 H2O. It functions in the pathway porphyrin-containing compound metabolism; protoporphyrin-IX biosynthesis; protoporphyrinogen-IX from coproporphyrinogen-III (O2 route): step 1/1. Its function is as follows. Involved in the heme biosynthesis. Catalyzes the aerobic oxidative decarboxylation of propionate groups of rings A and B of coproporphyrinogen-III to yield the vinyl groups in protoporphyrinogen-IX. The chain is Oxygen-dependent coproporphyrinogen-III oxidase from Pseudomonas fluorescens (strain ATCC BAA-477 / NRRL B-23932 / Pf-5).